The primary structure comprises 206 residues: Phosphoribosyl-dephospho-CoA transferase (206 aa).

Active-site residues include D131 and D133.

This sequence belongs to the MdcG family.

It catalyses the reaction apo-[malonate decarboxylase ACP] + 2'-(5''-triphospho-alpha-D-ribosyl)-3'-dephospho-CoA = holo-[malonate decarboxylase ACP] + diphosphate. Functionally, transfers 2'-(5-triphosphoribosyl)-3'-dephosphocoenzyme-A to the apo-[acyl-carrier-protein] of the malonate decarboxylase to yield holo-[acyl-carrier-protein]. The polypeptide is Phosphoribosyl-dephospho-CoA transferase (Pseudomonas fluorescens (strain Pf0-1)).